A 291-amino-acid chain; its full sequence is METISTIAALRERLAAYRRAGKSIGLVPTMGYLHAGHMELVSRARAENDIVVVSIFVNPLQFGANEDLAKYPRDLERDSAILRDGKVDFIFAPGVADMYPRPMETVVDVPKLGTELEGAVRPGHFAGVATVVTKLFNIVQPDSAYFGEKDYQQVAIIRRMVEDLAQPVRVVPVPTVRDADGLALSSRNVYLSTEQRAAAVIVPKALAEAERLYNEGADDPIAFEAALRDFIASEPFATPEVTAVRHPDTLEPLTNLQGQPILVALFVRIGATRLLDNRVVGRKQASSDKAA.

30 to 37 (MGYLHAGH) serves as a coordination point for ATP. The Proton donor role is filled by His37. Gln61 contributes to the (R)-pantoate binding site. Gln61 contributes to the beta-alanine binding site. 147–150 (GEKD) is an ATP binding site. Gln153 contributes to the (R)-pantoate binding site. Residues Val176 and 184–187 (LSSR) contribute to the ATP site.

This sequence belongs to the pantothenate synthetase family. Homodimer.

It localises to the cytoplasm. It carries out the reaction (R)-pantoate + beta-alanine + ATP = (R)-pantothenate + AMP + diphosphate + H(+). Its pathway is cofactor biosynthesis; (R)-pantothenate biosynthesis; (R)-pantothenate from (R)-pantoate and beta-alanine: step 1/1. Functionally, catalyzes the condensation of pantoate with beta-alanine in an ATP-dependent reaction via a pantoyl-adenylate intermediate. The polypeptide is Pantothenate synthetase (Rhizobium rhizogenes (strain K84 / ATCC BAA-868) (Agrobacterium radiobacter)).